The chain runs to 188 residues: Probable manganese efflux pump MntP (188 aa).

5 helical membrane passes run Ile-3 to Gly-23, Leu-66 to Ile-86, Trp-106 to Phe-128, Ala-143 to Gly-163, and Ile-168 to Gly-188.

This sequence belongs to the MntP (TC 9.B.29) family.

It is found in the cell inner membrane. Functionally, probably functions as a manganese efflux pump. The chain is Probable manganese efflux pump MntP from Escherichia coli O139:H28 (strain E24377A / ETEC).